The following is a 360-amino-acid chain: Biotin synthase (360 aa).

Residues 1–25 are disordered; sequence MQHAPLNFVPDAAKVPPTPGQSPNA. One can recognise a Radical SAM core domain in the interval 58–285; it reads NAVQLSTLLS…KAMVRLSAGR (228 aa). Residues Cys-73, Cys-77, and Cys-80 each contribute to the [4Fe-4S] cluster site. 4 residues coordinate [2Fe-2S] cluster: Cys-117, Cys-148, Cys-208, and Arg-280. Residues 340–360 are disordered; the sequence is QAEGAQHSHSSHCHIDITPAD.

It belongs to the radical SAM superfamily. Biotin synthase family. Homodimer. It depends on [4Fe-4S] cluster as a cofactor. The cofactor is [2Fe-2S] cluster.

It carries out the reaction (4R,5S)-dethiobiotin + (sulfur carrier)-SH + 2 reduced [2Fe-2S]-[ferredoxin] + 2 S-adenosyl-L-methionine = (sulfur carrier)-H + biotin + 2 5'-deoxyadenosine + 2 L-methionine + 2 oxidized [2Fe-2S]-[ferredoxin]. It functions in the pathway cofactor biosynthesis; biotin biosynthesis; biotin from 7,8-diaminononanoate: step 2/2. Catalyzes the conversion of dethiobiotin (DTB) to biotin by the insertion of a sulfur atom into dethiobiotin via a radical-based mechanism. The protein is Biotin synthase of Ralstonia nicotianae (strain ATCC BAA-1114 / GMI1000) (Ralstonia solanacearum).